The primary structure comprises 286 residues: NH(3)-dependent NAD(+) synthetase (286 aa).

43–50 is an ATP binding site; the sequence is GVSGGVDS. Residue D49 participates in Mg(2+) binding. R131 serves as a coordination point for deamido-NAD(+). Residue T151 participates in ATP binding. Residue E156 participates in Mg(2+) binding. The deamido-NAD(+) site is built by K164 and D171. ATP contacts are provided by K180 and S202. The segment at 257 to 286 is disordered; sequence HEASSHKRSPPASPDLGEIKKHYKQHAGKK. 262–263 contributes to the deamido-NAD(+) binding site; sequence HK. Residues 277–286 are compositionally biased toward basic residues; it reads KHYKQHAGKK.

It belongs to the NAD synthetase family. Homodimer.

The catalysed reaction is deamido-NAD(+) + NH4(+) + ATP = AMP + diphosphate + NAD(+) + H(+). It functions in the pathway cofactor biosynthesis; NAD(+) biosynthesis; NAD(+) from deamido-NAD(+) (ammonia route): step 1/1. Its function is as follows. Catalyzes the ATP-dependent amidation of deamido-NAD to form NAD. Uses ammonia as a nitrogen source. The sequence is that of NH(3)-dependent NAD(+) synthetase from Aeropyrum pernix (strain ATCC 700893 / DSM 11879 / JCM 9820 / NBRC 100138 / K1).